Consider the following 333-residue polypeptide: Cytosolic Fe-S cluster assembly factor NBP35 (333 aa).

Residues cysteine 32, cysteine 46, cysteine 49, and cysteine 55 each coordinate [4Fe-4S] cluster. An ATP-binding site is contributed by 85-92 (GKGGVGKS). [4Fe-4S] cluster-binding residues include cysteine 258 and cysteine 261.

It belongs to the Mrp/NBP35 ATP-binding proteins family. NUBP1/NBP35 subfamily. Heterotetramer of 2 NBP35 and 2 CFD1 chains. Requires [4Fe-4S] cluster as cofactor.

It is found in the cytoplasm. It localises to the nucleus. Functionally, component of the cytosolic iron-sulfur (Fe/S) protein assembly (CIA) machinery. Required for maturation of extramitochondrial Fe-S proteins. The NBP35-CFD1 heterotetramer forms a Fe-S scaffold complex, mediating the de novo assembly of an Fe-S cluster and its transfer to target apoproteins. Required for biogenesis and export of both ribosomal subunits, which may reflect a role in assembly of the Fe/S clusters in RLI1, a protein which performs rRNA processing and ribosome export. The chain is Cytosolic Fe-S cluster assembly factor NBP35 from Eremothecium gossypii (strain ATCC 10895 / CBS 109.51 / FGSC 9923 / NRRL Y-1056) (Yeast).